A 693-amino-acid polypeptide reads, in one-letter code: CREB-regulated transcription coactivator 2 (693 aa).

Residues methionine 1 to arginine 20 show a composition bias toward polar residues. The disordered stretch occupies residues methionine 1–lysine 30. Alanine 2 is modified (N-acetylalanine). Asymmetric dimethylarginine; by PRMT6 is present on arginine 51. 3 positions are modified to phosphoserine: serine 70, serine 86, and serine 90. Asymmetric dimethylarginine; by PRMT6 occurs at positions 99, 120, and 123. Serine 136 bears the Phosphoserine mark. Residues arginine 161 and arginine 168 each carry the asymmetric dimethylarginine; by PRMT6 modification. Threonine 169 is modified (phosphothreonine). Serine 171 is subject to Phosphoserine; by AMPK, MARK2, SIK1 and SIK2. Position 192 is a phosphothreonine (threonine 192). Lysine 234 is covalently cross-linked (Glycyl lysine isopeptide (Lys-Gly) (interchain with G-Cter in SUMO2)). The short motif at threonine 271–leucine 287 is the Nuclear export signal element. Serine 274 is modified (phosphoserine; by MARK2). 2 disordered regions span residues histidine 282 to serine 306 and glycine 328 to phenylalanine 554. Phosphoserine is present on residues serine 306, serine 368, serine 393, serine 433, and serine 456. Low complexity-rich tracts occupy residues alanine 331 to alanine 378 and serine 386 to serine 415. The span at serine 447–glutamine 468 shows a compositional bias: polar residues. A Phosphotyrosine modification is found at tyrosine 488. Phosphoserine is present on residues serine 489, serine 490, and serine 492. The span at glutamine 498–glutamine 507 shows a compositional bias: polar residues. Threonine 501 carries the phosphothreonine modification. Residues glycine 509–serine 529 are compositionally biased toward low complexity. Serine 613, serine 623, and serine 624 each carry phosphoserine.

This sequence belongs to the TORC family. Binds, as a tetramer, through its N-terminal region, with the bZIP domain of CREB1. 'Arg-314' in the bZIP domain of CREB1 is essential for this interaction. Interaction, via its C-terminal, with TAF4, enhances recruitment of TAF4 to CREB1. Interacts with SIK2. Interacts with 14-3-3 proteins, YWHAB and YWHAG. Interacts (probably when phosphorylated at Ser-171) with YWHAE. Interacts with calmodulin-dependent catalytic subunit PPP3CA/calcineurin A. Interaction with COP1 mediates nuclear export and degradation of CRTC2. In terms of assembly, (Microbial infection) Interaction with the human T-cell leukemia virus type 1 (HTLV-1) Tax protein is essential for optimal transcription activation by Tax. Phosphorylation/dephosphorylation states of Ser-171 are required for regulating transduction of CREB activity. CRTCs/TORCs are inactive when phosphorylated, and active when dephosphorylated at this site. This primary site of phosphorylation, is regulated by cAMP and calcium levels and is dependent on the phosphorylation of SIKs (SIK1 and SIK2) by LKB1. Following adenylyl cyclase activation, dephosphorylated at Ser-171 by PPP3CA/calcineurin A resulting in CRTC2 dissociation from 14-3-3 proteins and PPP3CA. Both insulin and AMPK increase this phosphorylation of CRTC2 while glucagon suppresses it. Phosphorylation at Ser-274 by MARK2 is induced under low glucose conditions and dephosphorylated in response to glucose influx. Phosphorylation at Ser-274 promotes interaction with 14-3-3 proteins and translocation to the cytoplasm. Post-translationally, asymmetric dimethylation of arginine resisues by PRMT6 enhances the association of CRTC2 with CREB on the promoters of gluconeogenic genes. Most abundantly expressed in the thymus. Present in both B and T-lymphocytes. Highly expressed in HEK293T cells and in insulinomas. High levels also in spleen, ovary, muscle and lung, with highest levels in muscle. Lower levels found in brain, colon, heart, kidney, prostate, small intestine and stomach. Weak expression in liver and pancreas.

It localises to the cytoplasm. Its subcellular location is the nucleus. Its function is as follows. Transcriptional coactivator for CREB1 which activates transcription through both consensus and variant cAMP response element (CRE) sites. Acts as a coactivator, in the SIK/TORC signaling pathway, being active when dephosphorylated and acts independently of CREB1 'Ser-133' phosphorylation. Enhances the interaction of CREB1 with TAF4. Regulates gluconeogenesis as a component of the LKB1/AMPK/TORC2 signaling pathway. Regulates the expression of specific genes such as the steroidogenic gene, StAR. Potent coactivator of PPARGC1A and inducer of mitochondrial biogenesis in muscle cells. Also coactivator for TAX activation of the human T-cell leukemia virus type 1 (HTLV-1) long terminal repeats (LTR). This is CREB-regulated transcription coactivator 2 (CRTC2) from Homo sapiens (Human).